Consider the following 231-residue polypeptide: Cytochrome c oxidase subunit 2 (231 aa).

At 1–14 the chain is on the mitochondrial intermembrane side; sequence MAHPAQLGLQNATS. The chain crosses the membrane as a helical span at residues 15-45; it reads PIMEELIAFHDHALMIIFLISSLVLYIISLM. The Mitochondrial matrix segment spans residues 46–59; that stretch reads LTTKLTHTSTMNAQ. The chain crosses the membrane as a helical span at residues 60 to 87; that stretch reads EIEMVWTILPAIILIMIALPSLRILYMT. The Mitochondrial intermembrane segment spans residues 88 to 231; sequence DEFNKPYLTL…WASYLYIVSL (144 aa). Residues His-161, Cys-196, Glu-198, Cys-200, His-204, and Met-207 each contribute to the Cu cation site. Glu-198 contributes to the Mg(2+) binding site.

It belongs to the cytochrome c oxidase subunit 2 family. Component of the cytochrome c oxidase (complex IV, CIV), a multisubunit enzyme composed of 14 subunits. The complex is composed of a catalytic core of 3 subunits MT-CO1, MT-CO2 and MT-CO3, encoded in the mitochondrial DNA, and 11 supernumerary subunits COX4I, COX5A, COX5B, COX6A, COX6B, COX6C, COX7A, COX7B, COX7C, COX8 and NDUFA4, which are encoded in the nuclear genome. The complex exists as a monomer or a dimer and forms supercomplexes (SCs) in the inner mitochondrial membrane with NADH-ubiquinone oxidoreductase (complex I, CI) and ubiquinol-cytochrome c oxidoreductase (cytochrome b-c1 complex, complex III, CIII), resulting in different assemblies (supercomplex SCI(1)III(2)IV(1) and megacomplex MCI(2)III(2)IV(2)). Found in a complex with TMEM177, COA6, COX18, COX20, SCO1 and SCO2. Interacts with TMEM177 in a COX20-dependent manner. Interacts with COX20. Interacts with COX16. Cu cation serves as cofactor.

It is found in the mitochondrion inner membrane. It catalyses the reaction 4 Fe(II)-[cytochrome c] + O2 + 8 H(+)(in) = 4 Fe(III)-[cytochrome c] + 2 H2O + 4 H(+)(out). Component of the cytochrome c oxidase, the last enzyme in the mitochondrial electron transport chain which drives oxidative phosphorylation. The respiratory chain contains 3 multisubunit complexes succinate dehydrogenase (complex II, CII), ubiquinol-cytochrome c oxidoreductase (cytochrome b-c1 complex, complex III, CIII) and cytochrome c oxidase (complex IV, CIV), that cooperate to transfer electrons derived from NADH and succinate to molecular oxygen, creating an electrochemical gradient over the inner membrane that drives transmembrane transport and the ATP synthase. Cytochrome c oxidase is the component of the respiratory chain that catalyzes the reduction of oxygen to water. Electrons originating from reduced cytochrome c in the intermembrane space (IMS) are transferred via the dinuclear copper A center (CU(A)) of subunit 2 and heme A of subunit 1 to the active site in subunit 1, a binuclear center (BNC) formed by heme A3 and copper B (CU(B)). The BNC reduces molecular oxygen to 2 water molecules using 4 electrons from cytochrome c in the IMS and 4 protons from the mitochondrial matrix. This is Cytochrome c oxidase subunit 2 (MT-CO2) from Lagothrix lagotricha (Brown woolly monkey).